A 664-amino-acid chain; its full sequence is Serine/threonine-protein kinase PknD (664 aa).

Residues 1 to 381 (MSDAVPQVGS…PAGNKRKVWA (381 aa)) lie on the Cytoplasmic side of the membrane. The Protein kinase domain maps to 15–276 (YQLLRLLGRG…DLAIAAHDAL (262 aa)). Residues 21–29 (LGRGGMGEV) and K44 each bind ATP. The residue at position 135 (T135) is a Phosphothreonine; by autocatalysis. D138 acts as the Proton acceptor in catalysis. Phosphothreonine; by autocatalysis is present on residues T169, T171, T173, and T209. The segment at 303-333 (TGLSQSESGIAGAGTGPPTPGAARWSPGDSA) is disordered. A helical transmembrane segment spans residues 382–402 (VVGAAAIVLVAIVAAAGYLVL). Over 403 to 664 (RPSWSPTQAS…GNDRVVKLTS (262 aa)) the chain is Extracellular. NHL repeat units lie at residues 414–456 (QTVL…LATG), 457–497 (STGT…LAAG), 498–539 (SNNQ…LAAG), 540–581 (SKTQ…LEAE), 582–623 (SNNQ…LLAG), and 624–664 (STTS…KLTS).

The protein belongs to the protein kinase superfamily. Ser/Thr protein kinase family. Homodimer. The extracellular domain interacts with host laminin. Autophosphorylated. Dephosphorylated by PstP.

The protein localises to the cell membrane. It carries out the reaction L-seryl-[protein] + ATP = O-phospho-L-seryl-[protein] + ADP + H(+). The catalysed reaction is L-threonyl-[protein] + ATP = O-phospho-L-threonyl-[protein] + ADP + H(+). Dimerization activates the kinase domain of unphosphorylated PknD via an allosteric mechanism, triggering autophosphorylation and phosphorylation of target proteins. Phosphorylated PknD is fully active even in the absence of dimerization. Part of a signaling pathway that enables adaptation to osmotic stress through cell wall remodeling and virulence factor production. Functionally, key microbial factor required for central nervous system tuberculosis. Required for invasion of host brain endothelia, but not macrophages, lung epithelia or other endothelia. This is Serine/threonine-protein kinase PknD (pknD) from Mycobacterium tuberculosis (strain CDC 1551 / Oshkosh).